We begin with the raw amino-acid sequence, 148 residues long: MFNDIGPLELVTLVVLAVLVFGPDKLPKMIQDVTRTIRKIREFSESAKQDIREELGPEFKDFEFEDLNPKTFIRKQLDNDELGLKEIRNGFDLKKEMAEVTDAVHGRESETSASSSSANGSAGGTVDMTKKREQLEADERPPFDADAT.

A helical membrane pass occupies residues 2–22 (FNDIGPLELVTLVVLAVLVFG). Composition is skewed to basic and acidic residues over residues 100-110 (VTDAVHGRESE) and 128-148 (MTKK…ADAT). The interval 100-148 (VTDAVHGRESETSASSSSANGSAGGTVDMTKKREQLEADERPPFDADAT) is disordered.

The protein belongs to the TatB family. The Tat system comprises two distinct complexes: a TatABC complex, containing multiple copies of TatA, TatB and TatC subunits, and a separate TatA complex, containing only TatA subunits. Substrates initially bind to the TatABC complex, which probably triggers association of the separate TatA complex to form the active translocon.

It is found in the cell membrane. Its function is as follows. Part of the twin-arginine translocation (Tat) system that transports large folded proteins containing a characteristic twin-arginine motif in their signal peptide across membranes. Together with TatC, TatB is part of a receptor directly interacting with Tat signal peptides. TatB may form an oligomeric binding site that transiently accommodates folded Tat precursor proteins before their translocation. The protein is Sec-independent protein translocase protein TatB of Streptomyces avermitilis (strain ATCC 31267 / DSM 46492 / JCM 5070 / NBRC 14893 / NCIMB 12804 / NRRL 8165 / MA-4680).